The primary structure comprises 395 residues: Ribosomal RNA large subunit methyltransferase G (395 aa).

Belongs to the methyltransferase superfamily. RlmG family.

It is found in the cytoplasm. The enzyme catalyses guanosine(1835) in 23S rRNA + S-adenosyl-L-methionine = N(2)-methylguanosine(1835) in 23S rRNA + S-adenosyl-L-homocysteine + H(+). In terms of biological role, specifically methylates the guanine in position 1835 (m2G1835) of 23S rRNA. The protein is Ribosomal RNA large subunit methyltransferase G of Yersinia pestis (strain Pestoides F).